The chain runs to 339 residues: Phenylalanine--tRNA ligase alpha subunit (339 aa).

Position 262 (Glu262) interacts with Mg(2+).

This sequence belongs to the class-II aminoacyl-tRNA synthetase family. Phe-tRNA synthetase alpha subunit type 1 subfamily. As to quaternary structure, tetramer of two alpha and two beta subunits. Mg(2+) is required as a cofactor.

The protein resides in the cytoplasm. It catalyses the reaction tRNA(Phe) + L-phenylalanine + ATP = L-phenylalanyl-tRNA(Phe) + AMP + diphosphate + H(+). In Neisseria gonorrhoeae (strain ATCC 700825 / FA 1090), this protein is Phenylalanine--tRNA ligase alpha subunit.